The sequence spans 130 residues: MSWKVPMLVGLVVLGTHIWTINKEFLDVTKDLDYFVASVEFAVAQFNDNNSEENTYRLLEVGRAQKKTWTMIFLMDLEMGRTICKKHDENIHNCPLLQGSGEKKVHCVFQVDARPWFSHFTVLTSTCVPT.

The first 23 residues, 1–23 (MSWKVPMLVGLVVLGTHIWTINK), serve as a signal peptide directing secretion. A Cystatin domain is found at 37 to 116 (ASVEFAVAQF…CVFQVDARPW (80 aa)). Intrachain disulfides connect Cys84/Cys94 and Cys107/Cys127.

This sequence belongs to the cystatin family.

It localises to the secreted. In terms of biological role, may play a specialized role in spermatogenesis. This Rattus norvegicus (Rat) protein is Cystatin domain-containing protein 1.